An 87-amino-acid chain; its full sequence is Small ribosomal subunit protein uS17 (87 aa).

The protein belongs to the universal ribosomal protein uS17 family. In terms of assembly, part of the 30S ribosomal subunit.

One of the primary rRNA binding proteins, it binds specifically to the 5'-end of 16S ribosomal RNA. In Onion yellows phytoplasma (strain OY-M), this protein is Small ribosomal subunit protein uS17.